A 338-amino-acid chain; its full sequence is mRNA decay activator protein ZFP36L1 (338 aa).

Residues 1–111 (MTTTLVSATI…QKQPGGGQVN (111 aa)) form a necessary and sufficient for the association with mRNA decay enzymes and mRNA decay activation region. At Ser54 the chain carries Phosphoserine; by MAPKAPK2. A Phosphoserine; by PKB/AKT1 modification is found at Ser90. Ser92 is subject to Phosphoserine; by PKB/AKT1 and MAPKAPK2. Residues 93–113 (EGGERLLPTQKQPGGGQVNSS) form a disordered region. 2 consecutive C3H1-type zinc fingers follow at residues 114 to 142 (RYKTELCRPFEENGACKYGDKCQFAHGIH) and 152 to 180 (KYKTELCRTFHTIGFCPYGPRCHFIHNAE). A necessary for mRNA decay activation region spans residues 185 to 338 (LAGARDLSAD…IFSRLSISDD (154 aa)). Position 203 is a phosphoserine; by PKB/AKT1 and MAPKAPK2 (Ser203). The segment at 273-338 (SPTTFLFRPM…IFSRLSISDD (66 aa)) is disordered. Residues 296-318 (QDSLSDQEGYLSSSSSSHSGSDS) are compositionally biased toward low complexity. The residue at position 318 (Ser318) is a Phosphoserine. Ser334 carries the post-translational modification Phosphoserine; by RPS6KA1.

In terms of assembly, associates with the cytoplasmic CCR4-NOT deadenylase and RNA exosome complexes to trigger ARE-containing mRNA deadenylation and decay processes. Interacts with CNOT1. Interacts (via N-terminus) with CNOT6. Interacts with CNOT7; this interaction is inhibited in response to phorbol 12-myristate 13-acetate (PMA) treatment in a p38 MAPK-dependent manner. Interacts with DCP1A. Interacts (via N-terminus) with DCP2. Interacts (via N-terminus) with EXOSC2. Interacts with XRN1. Interacts (via phosphorylated form) with YWHAB; this interaction occurs in a protein kinase AKT1-dependent manner. Interacts (via phosphorylated form) with YWHAZ; this interaction occurs in a p38 MAPK- and AKT-signaling pathways. Phosphorylated. Phosphorylated by RPS6KA1 at Ser-334 upon phorbol 12-myristate 13-acetate (PMA) treatment; this phosphorylation results in dissociation of the CCR4-NOT deadenylase complex and induces p38 MAPK-mediated stabilization of the low-density lipoprotein receptor LDLR mRNA. Phosphorylated by protein kinase AKT1 at Ser-92 and Ser-203 in response to insulin; these phosphorylations stabilize ZFP36L1, increase the association with 14-3-3 proteins and mediate ARE-containing mRNA stabilization. AKT1-mediated phosphorylation at Ser-92 does not impair ARE-containing RNA-binding. Phosphorylated at Ser-54, Ser-92 and Ser-203 by MAPKAPK2; these phosphorylations increase the association with 14-3-3 proteins and mediate ARE-containing mRNA stabilization in a protein kinase AKT1-independent manner. MAPKAPK2-mediated phosphorylations at Ser-54, Ser-92 and Ser-203 do not impair ARE-containing RNA-binding. Phosphorylations increase the association with 14-3-3 proteins and mediate ARE-containing mRNA stabilization during early adipogenesis in a p38 MAPK- and AKT-dependent manner. Post-translationally, ubiquitinated. Ubiquitination leads to proteasomal degradation, a process inhibited by phosphorylations at Ser-90, Ser-92 and Ser-203. Expressed mainly in the basal epidermal layer, weakly in the suprabasal epidermal layers. Expressed in epidermal keratinocytes (at protein level). Expressed in osteoblasts.

The protein resides in the nucleus. It localises to the cytoplasm. It is found in the cytoplasmic granule. The protein localises to the P-body. Zinc-finger RNA-binding protein that destabilizes several cytoplasmic AU-rich element (ARE)-containing mRNA transcripts by promoting their poly(A) tail removal or deadenylation, and hence provide a mechanism for attenuating protein synthesis. Acts as a 3'-untranslated region (UTR) ARE mRNA-binding adapter protein to communicate signaling events to the mRNA decay machinery. Functions by recruiting the CCR4-NOT deadenylase complex and components of the cytoplasmic RNA decay machinery to the bound ARE-containing mRNAs, and hence promotes ARE-mediated mRNA deadenylation and decay processes. Also induces the degradation of ARE-containing mRNAs even in absence of poly(A) tail. Binds to 3'-UTR ARE of numerous mRNAs. Positively regulates early adipogenesis by promoting ARE-mediated mRNA decay of immediate early genes (IEGs). Promotes ARE-mediated mRNA decay of mineralocorticoid receptor NR3C2 mRNA in response to hypertonic stress. Negatively regulates hematopoietic/erythroid cell differentiation by promoting ARE-mediated mRNA decay of the transcription factor STAT5B mRNA. Positively regulates monocyte/macrophage cell differentiation by promoting ARE-mediated mRNA decay of the cyclin-dependent kinase CDK6 mRNA. Promotes degradation of ARE-containing pluripotency-associated mRNAs in embryonic stem cells (ESCs), such as NANOG, through a fibroblast growth factor (FGF)-induced MAPK-dependent signaling pathway, and hence attenuates ESC self-renewal and positively regulates mesendoderm differentiation. May play a role in mediating pro-apoptotic effects in malignant B-cells by promoting ARE-mediated mRNA decay of BCL2 mRNA. In association with ZFP36L2 maintains quiescence on developing B lymphocytes by promoting ARE-mediated decay of several mRNAs encoding cell cycle regulators that help B cells progress through the cell cycle, and hence ensuring accurate variable-diversity-joining (VDJ) recombination and functional immune cell formation. Together with ZFP36L2 is also necessary for thymocyte development and prevention of T-cell acute lymphoblastic leukemia (T-ALL) transformation by promoting ARE-mediated mRNA decay of the oncogenic transcription factor NOTCH1 mRNA. Participates in the delivery of target ARE-mRNAs to processing bodies (PBs). In addition to its cytosolic mRNA-decay function, plays a role in the regulation of nuclear mRNA 3'-end processing; modulates mRNA 3'-end maturation efficiency of the DLL4 mRNA through binding with an ARE embedded in a weak noncanonical polyadenylation (poly(A)) signal in endothelial cells. Also involved in the regulation of stress granule (SG) and P-body (PB) formation and fusion. Plays a role in vasculogenesis and endocardial development. Plays a role in the regulation of keratinocyte proliferation, differentiation and apoptosis. Plays a role in myoblast cell differentiation. The chain is mRNA decay activator protein ZFP36L1 from Homo sapiens (Human).